The primary structure comprises 374 residues: WAT1-related protein At2g39510 (374 aa).

10 helical membrane passes run 9–29 (FITVVSLQFGYAGLSIIAKFA), 38–58 (VLASYRHIVATIFIAPFAYFL), 64–84 (PKMTLSIFFKILLLGLLEPTI), 99–119 (TFTAAMTNVLPAFAFIMAWIF), 135–155 (ILGTIVTVGGAMLMTVVKGPL), 182–202 (GASLIAIGCICWAGFINLQAI), 212–232 (SLTAYICFLGSIESTIVALFI), 249–269 (LAAVYGGVICSGIGYYVQGVI), 284–304 (LSMVIVAILGSIILAEVMFLG), and 306–326 (ILGAIVIVLGLYSVLWGKSKD). 2 consecutive EamA domains span residues 19–147 (YAGL…GAML) and 191–320 (ICWA…YSVL). The interval 350-374 (SKANAKMDTNDASVVISRPNTNESV) is disordered.

This sequence belongs to the drug/metabolite transporter (DMT) superfamily. Plant drug/metabolite exporter (P-DME) (TC 2.A.7.4) family.

The protein localises to the membrane. This chain is WAT1-related protein At2g39510, found in Arabidopsis thaliana (Mouse-ear cress).